The primary structure comprises 325 residues: D-alanine--D-alanine ligase (325 aa).

An ATP-grasp domain is found at Lys-121–Arg-316. Position 147–202 (Val-147–Thr-202) interacts with ATP. Mg(2+) contacts are provided by Asp-270, Glu-283, and Asn-285.

It belongs to the D-alanine--D-alanine ligase family. The cofactor is Mg(2+). Requires Mn(2+) as cofactor.

It is found in the cytoplasm. It catalyses the reaction 2 D-alanine + ATP = D-alanyl-D-alanine + ADP + phosphate + H(+). Its pathway is cell wall biogenesis; peptidoglycan biosynthesis. In terms of biological role, cell wall formation. In Marinobacter nauticus (strain ATCC 700491 / DSM 11845 / VT8) (Marinobacter aquaeolei), this protein is D-alanine--D-alanine ligase.